The primary structure comprises 69 residues: uncharacterized protein (69 aa).

The N-terminal stretch at 1 to 21 is a signal peptide; that stretch reads MNTKFILILLVLIISTIFVNS.

The protein localises to the secreted. This is an uncharacterized protein from Dictyostelium discoideum (Social amoeba).